A 2147-amino-acid polypeptide reads, in one-letter code: Probable serine/threonine-protein kinase roco6 (2147 aa).

The Extracellular segment spans residues 1-1055; the sequence is MNSIHKQHYT…LDHSRVEFNR (1055 aa). LRR repeat units follow at residues 69–89, 101–122, 124–145, 148–169, 171–192, 193–214, 215–236, 237–256, 306–328, 329–350, and 352–372; these read DMKY…MMIP, SISI…LKQL, QLIS…FPEE, LLRK…FNKF, ILED…LFPE, GIMR…PWFE, SLLT…PFHL, VRVS…VILR, HLTH…ANLT, ELVR…IVSY, and RLEH…PRRI. The Roc domain maps to 390–750; that stretch reads QGEPSYRVKL…DLLKKTVVEL (361 aa). The small GTPase-like stretch occupies residues 390–750; that stretch reads QGEPSYRVKL…DLLKKTVVEL (361 aa). 403 to 410 provides a ligand contact to GTP; sequence GQENVGKT. 2 disordered regions span residues 491–582 and 602–621; these read NSNG…VGTN and SNLS…GGSG. 4 stretches are compositionally biased toward low complexity: residues 492–512, 519–531, 539–568, and 602–617; these read SNGV…NIHS, NVNS…SNNS, NSFL…NVNS, and SNLS…NNNS. GTP contacts are provided by residues 634–638 and 691–694; these read DCAGQ and THLD. The region spanning 758 to 892 is the COR domain; the sequence is PELYLKLEKL…RFELMFPLDS (135 aa). Low complexity-rich tracts occupy residues 905 to 941 and 960 to 977; these read GNSY…SPST and SGNN…RSIS. The segment at 905–995 is disordered; it reads GNSYVNNNNN…NSDLDLIGGG (91 aa). A WD 1 repeat occupies 1051 to 1098; it reads VEFNRWIQLSFAPAGLFSRLLIRLLISKEFDMKPILYWRNGVVVESQS. Residues 1056–1076 form a helical membrane-spanning segment; the sequence is WIQLSFAPAGLFSRLLIRLLI. Residues 1077–2147 are Cytoplasmic-facing; the sequence is SKEFDMKPIL…CGTNNVCIWS (1071 aa). LRR repeat units follow at residues 1237–1263, 1274–1297, and 1325–1348; these read ILSI…PPPP, DDNI…GSQP, and ESSL…TYKY. The 272-residue stretch at 1356–1627 folds into the Protein kinase domain; the sequence is FESPKLIGRG…KIVKRIKQII (272 aa). ATP-binding positions include 1362-1370 and K1383; that span reads IGRGASGKI. D1481 (proton acceptor) is an active-site residue. The segment at 1653–1699 is disordered; that stretch reads ADSQPFHYHQQQQPSLNSTNQLQQQQYSSVLTSPRSNLSDSSNSSQN. The span at 1662–1699 shows a compositional bias: low complexity; it reads QQQQPSLNSTNQLQQQQYSSVLTSPRSNLSDSSNSSQN. 2 WD repeats span residues 1735–1774 and 1778–1820; these read QPEA…QIFR and LHPG…LDDQ. Positions 1821–1923 constitute a PH domain; the sequence is SGTKSDFITK…WLTAINRVIN (103 aa). The WD 4 repeat unit spans residues 2031–2068; it reads HYSKPITSMALVEKNVWISCEDESLSVWDGDTGSFIRK.

It belongs to the protein kinase superfamily. TKL Ser/Thr protein kinase family. ROCO subfamily.

The protein localises to the membrane. The catalysed reaction is L-seryl-[protein] + ATP = O-phospho-L-seryl-[protein] + ADP + H(+). It catalyses the reaction L-threonyl-[protein] + ATP = O-phospho-L-threonyl-[protein] + ADP + H(+). Its function is as follows. May act as a serine/threonine-protein kinase and guanine-nucleotide releasing factor. The protein is Probable serine/threonine-protein kinase roco6 (roco6) of Dictyostelium discoideum (Social amoeba).